A 207-amino-acid chain; its full sequence is BTB/POZ domain-containing protein At1g01640 (207 aa).

The 71-residue stretch at 24–94 (TDVLVKPGEE…LYSGNLKAPY (71 aa)) folds into the BTB domain.

As to quaternary structure, interacts with CUL3A.

It functions in the pathway protein modification; protein ubiquitination. In terms of biological role, may act as a substrate-specific adapter of an E3 ubiquitin-protein ligase complex (CUL3-RBX1-BTB) which mediates the ubiquitination and subsequent proteasomal degradation of target proteins. The protein is BTB/POZ domain-containing protein At1g01640 of Arabidopsis thaliana (Mouse-ear cress).